The sequence spans 294 residues: Ferredoxin--NADP reductase (294 aa).

One can recognise an FAD-binding FR-type domain in the interval 13-137 (KNPYIGKCLS…TGPVGKEMLL (125 aa)). FAD contacts are provided by residues 72-75 (RLYS), 93-95 (CVR), Tyr99, 111-113 (VCS), and Thr152. Residues Ser75 and Arg95 each coordinate NADP(+). NADP(+) is bound by residues Thr152, 184 to 185 (IP), 214 to 215 (SR), Lys224, 224 to 228 (KMYIQ), 253 to 254 (GL), and Glu292.

This sequence belongs to the ferredoxin--NADP reductase type 1 family. FAD is required as a cofactor.

The protein localises to the cellular thylakoid membrane. The catalysed reaction is 2 reduced [2Fe-2S]-[ferredoxin] + NADP(+) + H(+) = 2 oxidized [2Fe-2S]-[ferredoxin] + NADPH. This is Ferredoxin--NADP reductase (petH) from Spirulina sp.